A 578-amino-acid polypeptide reads, in one-letter code: Malonate--CoA ligase ACSF3, mitochondrial (578 aa).

The transit peptide at 1 to 19 (MRVGAFLGRSLFSCSHVRG) directs the protein to the mitochondrion. ATP is bound at residue 205–213 (TSGTTGRPK). The interval 394–413 (QNPRKEGTSYTTHAQGDSTG) is disordered. ATP-binding residues include Asp459, Arg473, and Lys565.

The protein belongs to the ATP-dependent AMP-binding enzyme family.

It localises to the mitochondrion. It carries out the reaction tetracosanoate + ATP + CoA = tetracosanoyl-CoA + AMP + diphosphate. It catalyses the reaction malonate + ATP + CoA = malonyl-CoA + AMP + diphosphate. Its function is as follows. Catalyzes the initial reaction in intramitochondrial fatty acid synthesis, by activating malonate and methylmalonate, but not acetate, into their respective CoA thioester. May have some preference toward very-long-chain substrates. The sequence is that of Malonate--CoA ligase ACSF3, mitochondrial from Xenopus laevis (African clawed frog).